Consider the following 752-residue polypeptide: Reticulon-1-B (752 aa).

4 disordered regions span residues M1–D57, E264–Q319, K334–I424, and E444–M465. A compositionally biased stretch (polar residues) spans E264–S273. Residues K334–D361 show a composition bias toward basic and acidic residues. The span at T363–S383 shows a compositional bias: polar residues. In terms of domain architecture, Reticulon spans A566–E752. Helical transmembrane passes span I580–V600 and V684–M704.

As to expression, isoform A and isoform C are both expressed in the animal hemisphere (presumptive neural ectoderm) of blastula and gastrula stage embryos, and along the anterior neural border, in the panplacodal primordium, and in the dorsolateral side of archenteron roof of late neurula embryos. At the tailbud stage, expression of the isoforms begin to differ. Isoform A localizes to the cranial placodes including the trigeminal placode, lateral line placode, olfactory placode and otic vesicle. Isoform C localizes to the central nervous system, including the spinal cord, prosencephalon, mesencephalon and rhombencephalon, as well as the lateral line placode, otic vesicle and pronephros.

It is found in the endoplasmic reticulum membrane. Its subcellular location is the nucleus. Its function is as follows. Inhibits amyloid precursor protein processing, probably by blocking BACE1 activity. The polypeptide is Reticulon-1-B (rtn1-b) (Xenopus laevis (African clawed frog)).